Here is a 477-residue protein sequence, read N- to C-terminus: Glycogen synthase (477 aa).

Lys-15 provides a ligand contact to ADP-alpha-D-glucose.

The protein belongs to the glycosyltransferase 1 family. Bacterial/plant glycogen synthase subfamily.

The catalysed reaction is [(1-&gt;4)-alpha-D-glucosyl](n) + ADP-alpha-D-glucose = [(1-&gt;4)-alpha-D-glucosyl](n+1) + ADP + H(+). It participates in glycan biosynthesis; glycogen biosynthesis. Synthesizes alpha-1,4-glucan chains using ADP-glucose. This Streptococcus pneumoniae serotype 19F (strain G54) protein is Glycogen synthase.